Consider the following 81-residue polypeptide: Cell division protein ZapB (81 aa).

Residues 6-80 are a coiled coil; sequence EVFEKLEAKV…LQALLGRMEE (75 aa). Residues 38 to 47 are compositionally biased toward polar residues; sequence SLAQDVQSAQ. Positions 38-67 are disordered; sequence SLAQDVQSAQHQREELERENNHLKEQQSGW. Over residues 48–62 the composition is skewed to basic and acidic residues; it reads HQREELERENNHLKE.

The protein belongs to the ZapB family. Homodimer. The ends of the coiled-coil dimer bind to each other, forming polymers. Interacts with FtsZ.

The protein localises to the cytoplasm. Its function is as follows. Non-essential, abundant cell division factor that is required for proper Z-ring formation. It is recruited early to the divisome by direct interaction with FtsZ, stimulating Z-ring assembly and thereby promoting cell division earlier in the cell cycle. Its recruitment to the Z-ring requires functional FtsA or ZipA. The chain is Cell division protein ZapB from Citrobacter koseri (strain ATCC BAA-895 / CDC 4225-83 / SGSC4696).